Consider the following 613-residue polypeptide: DNA repair and telomere maintenance protein nbs1 (613 aa).

In terms of domain architecture, FHA spans 23–86; it reads YIVGRNVSDD…FGTKVNEKVV (64 aa). BRCT domains lie at 107–186 and 228–302; these read FTIN…YLST and GFSC…KIII. Position 355 is a phosphoserine (S355). 2 disordered regions span residues 381 to 428 and 546 to 613; these read KEPE…GQGK and TEVF…KFHF. The span at 387–399 shows a compositional bias: polar residues; it reads LSNQSNNGSAQNK. A compositionally biased stretch (basic and acidic residues) spans 400 to 409; sequence KSGDNSEKTK. Over residues 574-592 the composition is skewed to low complexity; that stretch reads SSDKSGKSSISKKSSNSFK. Residues 611–613 carry the FxF/Y motif motif; it reads FHF.

The protein belongs to the Nibrin family. Component of the MRN complex composed of two heterodimers rad32 and rad50 associated with a single nbs1. Interacts with (phosphorylated) ctp1/CtIP. Interacts (via FxF/Y motif) with tel1/atm.

It localises to the nucleus. The protein resides in the chromosome. The protein localises to the telomere. Its function is as follows. Component of the MRN complex, which plays a central role in double-strand break (DSB) repair, DNA recombination, maintenance of telomere integrity and meiosis. The MRN complex is involved in the repair of DNA double-strand breaks (DSBs) via homologous recombination (HR), an error-free mechanism which primarily occurs during S and G2 phases. The complex (1) mediates the end resection of damaged DNA, which generates proper single-stranded DNA, a key initial steps in HR, and is (2) required for the recruitment of other repair factors and efficient activation of tel1/atm upon DNA damage. The MRN complex possesses single-strand endonuclease activity and double-strand-specific 3'-5' exonuclease activity, which are provided by MRE11, to initiate end resection, which is required for single-strand invasion and recombination. Within the MRN complex, nbs1 acts as a protein-protein adapter, which specifically recognizes and binds phosphorylated proteins, promoting their recruitment to DNA damage sites. Recruits rad32 and rad50 components of the MRN complex to DSBs in response to DNA damage. Promotes the recruitment of tel1/atm to the DNA damage sites, activating tel1/atm function. Mediates the recruitment of phosphorylated ctp1/CtIP to DSBs, leading to cooperation between the MRN complex and ctp1/CtIP to initiate end resection. The sequence is that of DNA repair and telomere maintenance protein nbs1 from Schizosaccharomyces pombe (strain 972 / ATCC 24843) (Fission yeast).